A 353-amino-acid polypeptide reads, in one-letter code: uncharacterized protein (353 aa).

Positions 1–20 (MLMRSVCFILLAVLLFSLSA) are cleaved as a signal peptide. Cys21 carries the N-palmitoyl cysteine lipid modification. The S-diacylglycerol cysteine moiety is linked to residue Cys21.

It is found in the cell membrane. This is an uncharacterized protein from Bacillus subtilis (strain 168).